We begin with the raw amino-acid sequence, 1188 residues long: NF-X1-type zinc finger protein NFXL1 (1188 aa).

Positions 1–15 are enriched in basic and acidic residues; sequence MSFQVRRDRSDDRSH. 2 disordered regions span residues 1–52 and 65–195; these read MSFQ…ETLD and QHNA…VAKE. Polar residues-rich tracts occupy residues 19 to 34 and 168 to 186; these read HQQT…SSVV and ASGT…TRPV. Residues 223–279 form an RING-type; degenerate zinc finger; that stretch reads CMICYDKVGRSANIWSCSSCYSIFHINCIKRWARAPTSVDLLAEKNQGDNWRCPGCQ. 9 NF-X1-type zinc fingers span residues 335–353, 390–409, 454–473, 513–532, 572–607, 611–630, 668–686, 721–751, and 760–781; these read CPHV…PCKA, CGRH…PCQV, CGNH…DCDL, CRLH…PCLV, CGRH…PCQK, CGQH…PCLE, CGHS…PCST, CGMH…TCRQ, and CRHT…RCEF. Positions 894–963 constitute an R3H domain; sequence PKWVLAVEER…KRFTVVHVTA (70 aa). A disordered region spans residues 1100–1188; it reads SDDSWGAEDS…VVDDWEKVCE (89 aa). 2 stretches are compositionally biased toward polar residues: residues 1126-1138 and 1159-1169; these read AKSN…SVNR and EESSSSKTTGK.

The protein belongs to the NFX1 family. Expressed in seedlings, roots, stems, leaves, buds, flowers and siliques.

The protein localises to the nucleus. The protein operates within protein modification; protein ubiquitination. Its function is as follows. Mediates E2-dependent ubiquitination. Confers resistance to osmotic stress such as high salinity. Promotes H(2)O(2) production. Negative regulator of some defense-related genes via an salicylic acid (SA)-dependent signaling pathway. Confers susceptibility to the compatible phytopathogen Pseudomonas syringae pv. tomato strain DC3000 (Pst DC3000). Mediates resistance to type A trichothecenes (phytotoxins produced by phytopathogenic fungi). The chain is NF-X1-type zinc finger protein NFXL1 (NFXL1) from Arabidopsis thaliana (Mouse-ear cress).